We begin with the raw amino-acid sequence, 145 residues long: Protein cornichon homolog 1 (145 aa).

Helical transmembrane passes span 5–25 (FAAF…FFAI), 57–77 (IIHG…SILA), and 116–136 (LRIS…YLYA).

It belongs to the cornichon family. Interacts with glr-1. In terms of tissue distribution, widely expressed in the nervous system including in the AVA interneurons.

It localises to the endoplasmic reticulum membrane. The protein resides in the synapse. The protein localises to the cell projection. Its subcellular location is the dendrite. Functionally, negatively regulates export of glr-1 from the endoplasmic reticulum to synapses. The polypeptide is Protein cornichon homolog 1 (Caenorhabditis elegans).